Here is a 354-residue protein sequence, read N- to C-terminus: Uroporphyrinogen decarboxylase (354 aa).

Residues 27-31, D77, Y154, T209, and H327 contribute to the substrate site; that span reads RQAGR.

This sequence belongs to the uroporphyrinogen decarboxylase family. In terms of assembly, homodimer.

The protein localises to the cytoplasm. The enzyme catalyses uroporphyrinogen III + 4 H(+) = coproporphyrinogen III + 4 CO2. The protein operates within porphyrin-containing compound metabolism; protoporphyrin-IX biosynthesis; coproporphyrinogen-III from 5-aminolevulinate: step 4/4. Its function is as follows. Catalyzes the decarboxylation of four acetate groups of uroporphyrinogen-III to yield coproporphyrinogen-III. This is Uroporphyrinogen decarboxylase from Citrobacter koseri (strain ATCC BAA-895 / CDC 4225-83 / SGSC4696).